The primary structure comprises 1033 residues: Immunoglobulin superfamily member 2 (1033 aa).

The signal sequence occupies residues 1 to 20; that stretch reads MACILCVASLFLSLTKFSIG. Topologically, residues 21-970 are extracellular; the sequence is QREVKIQEGP…VSSLICSSGP (950 aa). 7 consecutive Ig-like C2-type domains span residues 22–141, 144–266, 279–388, 408–529, 539–657, 670–797, and 806–941; these read REVK…TNLT, PDTL…TLIT, PAAR…TQMG, PAAR…QKIS, LRVN…ARVS, PESK…RKTS, and PTGS…KWIN. A disulfide bridge links cysteine 43 with cysteine 121. A glycan (N-linked (GlcNAc...) asparagine) is linked at asparagine 139. An intrachain disulfide couples cysteine 168 to cysteine 249. Positions 253 to 255 match the EWI motif motif; the sequence is EWI. Intrachain disulfides connect cysteine 304/cysteine 377, cysteine 432/cysteine 509, and cysteine 560/cysteine 638. An N-linked (GlcNAc...) asparagine glycan is attached at asparagine 677. Intrachain disulfides connect cysteine 695/cysteine 776 and cysteine 832/cysteine 925. A helical membrane pass occupies residues 971 to 991; it reads LLHFLIVCPFVMLLLLATSFL. Topologically, residues 992–1033 are cytoplasmic; the sequence is CLYRKARKLSQLSLSAKKEKALWVGMRKTSLQKEAGEESGHY.

N-glycosylated.

It localises to the membrane. Its function is as follows. Plays a role as inhibitor of T-cells proliferation induced by CD3. Inhibits expression of IL2RA on activated T-cells and secretion of IL2. Inhibits tyrosine kinases that are required for IL2 production and cellular proliferation. Inhibits phospholipase C-gamma-1/PLCG1 phosphorylation and subsequent CD3-induced changes in intracellular free calcium. Prevents nuclear translocation of nuclear factor of activated T-cell to the nucleus. Plays a role in the inhibition of T-cell proliferation via IL10 secretion by cutaneous dendritic cells. This Mus musculus (Mouse) protein is Immunoglobulin superfamily member 2 (Cd101).